Reading from the N-terminus, the 262-residue chain is Transmembrane protein 270 (262 aa).

The next 5 helical transmembrane spans lie at 6–26 (LVRS…ALLI), 30–50 (AHLY…LLGL), 67–87 (PVGR…CLAL), 92–112 (LVWA…KWLG), and 127–147 (LFLS…LLVW). The disordered stretch occupies residues 226 to 262 (QEAEPQKALGLSSETPPPGPPAPGARPVLPEPGTPGE). The span at 240–262 (TPPPGPPAPGARPVLPEPGTPGE) shows a compositional bias: pro residues.

The protein localises to the membrane. This chain is Transmembrane protein 270, found in Bos taurus (Bovine).